We begin with the raw amino-acid sequence, 314 residues long: 4-hydroxy-3-methylbut-2-enyl diphosphate reductase (314 aa).

Cys-12 provides a ligand contact to [4Fe-4S] cluster. 2 residues coordinate (2E)-4-hydroxy-3-methylbut-2-enyl diphosphate: His-43 and His-81. Residues His-43 and His-81 each contribute to the dimethylallyl diphosphate site. Residues His-43 and His-81 each contribute to the isopentenyl diphosphate site. Cys-103 serves as a coordination point for [4Fe-4S] cluster. His-131 provides a ligand contact to (2E)-4-hydroxy-3-methylbut-2-enyl diphosphate. His-131 serves as a coordination point for dimethylallyl diphosphate. Residue His-131 coordinates isopentenyl diphosphate. Catalysis depends on Glu-133, which acts as the Proton donor. A (2E)-4-hydroxy-3-methylbut-2-enyl diphosphate-binding site is contributed by Thr-170. Cys-198 is a binding site for [4Fe-4S] cluster. (2E)-4-hydroxy-3-methylbut-2-enyl diphosphate contacts are provided by Ser-226, Asn-228, and Ser-271. 3 residues coordinate dimethylallyl diphosphate: Ser-226, Asn-228, and Ser-271. Isopentenyl diphosphate is bound by residues Ser-226, Asn-228, and Ser-271.

Belongs to the IspH family. [4Fe-4S] cluster serves as cofactor.

It carries out the reaction isopentenyl diphosphate + 2 oxidized [2Fe-2S]-[ferredoxin] + H2O = (2E)-4-hydroxy-3-methylbut-2-enyl diphosphate + 2 reduced [2Fe-2S]-[ferredoxin] + 2 H(+). It catalyses the reaction dimethylallyl diphosphate + 2 oxidized [2Fe-2S]-[ferredoxin] + H2O = (2E)-4-hydroxy-3-methylbut-2-enyl diphosphate + 2 reduced [2Fe-2S]-[ferredoxin] + 2 H(+). Its pathway is isoprenoid biosynthesis; dimethylallyl diphosphate biosynthesis; dimethylallyl diphosphate from (2E)-4-hydroxy-3-methylbutenyl diphosphate: step 1/1. It functions in the pathway isoprenoid biosynthesis; isopentenyl diphosphate biosynthesis via DXP pathway; isopentenyl diphosphate from 1-deoxy-D-xylulose 5-phosphate: step 6/6. Catalyzes the conversion of 1-hydroxy-2-methyl-2-(E)-butenyl 4-diphosphate (HMBPP) into a mixture of isopentenyl diphosphate (IPP) and dimethylallyl diphosphate (DMAPP). Acts in the terminal step of the DOXP/MEP pathway for isoprenoid precursor biosynthesis. The chain is 4-hydroxy-3-methylbut-2-enyl diphosphate reductase from Halalkalibacterium halodurans (strain ATCC BAA-125 / DSM 18197 / FERM 7344 / JCM 9153 / C-125) (Bacillus halodurans).